The following is a 192-amino-acid chain: Flavin prenyltransferase UbiX (192 aa).

FMN-binding positions include 10–12 (GAS), S36, 92–95 (SVAT), and R127. 2 residues coordinate dimethylallyl phosphate: Y157 and K173.

It belongs to the UbiX/PAD1 family.

It catalyses the reaction dimethylallyl phosphate + FMNH2 = prenylated FMNH2 + phosphate. Functionally, flavin prenyltransferase that catalyzes the synthesis of the prenylated FMN cofactor (prenyl-FMN) for 4-hydroxy-3-polyprenylbenzoic acid decarboxylase UbiD. The prenyltransferase is metal-independent and links a dimethylallyl moiety from dimethylallyl monophosphate (DMAP) to the flavin N5 and C6 atoms of FMN. The sequence is that of Flavin prenyltransferase UbiX from Chlamydia muridarum (strain MoPn / Nigg).